Here is a 243-residue protein sequence, read N- to C-terminus: Proteasome subunit beta (243 aa).

Polar residues predominate over residues 1 to 16 (MRAPQHNSDFSRTVNQ). The interval 1-29 (MRAPQHNSDFSRTVNQLADDPNPYEPEVG) is disordered. Residues 1–48 (MRAPQHNSDFSRTVNQLADDPNPYEPEVGSMPKNEFSRADLDNVNKTG) constitute a propeptide, removed in mature form; by autocatalysis. Thr-49 functions as the Nucleophile in the catalytic mechanism.

Belongs to the peptidase T1B family. In terms of assembly, the 20S proteasome core is composed of 14 alpha and 14 beta subunits that assemble into four stacked heptameric rings, resulting in a barrel-shaped structure. The two inner rings, each composed of seven catalytic beta subunits, are sandwiched by two outer rings, each composed of seven alpha subunits. The catalytic chamber with the active sites is on the inside of the barrel. Has a gated structure, the ends of the cylinder being occluded by the N-termini of the alpha-subunits. Is capped at one or both ends by the proteasome regulatory ATPase, PAN.

It localises to the cytoplasm. It catalyses the reaction Cleavage of peptide bonds with very broad specificity.. The formation of the proteasomal ATPase PAN-20S proteasome complex, via the docking of the C-termini of PAN into the intersubunit pockets in the alpha-rings, triggers opening of the gate for substrate entry. Interconversion between the open-gate and close-gate conformations leads to a dynamic regulation of the 20S proteasome proteolysis activity. Component of the proteasome core, a large protease complex with broad specificity involved in protein degradation. The polypeptide is Proteasome subunit beta (Natrialba magadii (strain ATCC 43099 / DSM 3394 / CCM 3739 / CIP 104546 / IAM 13178 / JCM 8861 / NBRC 102185 / NCIMB 2190 / MS3) (Natronobacterium magadii)).